The following is a 452-amino-acid chain: Probable carboxypeptidase ACLA_088580 (452 aa).

Positions 1–18 (MRSLTLLLSLSTALRSVA) are cleaved as a signal peptide. N-linked (GlcNAc...) asparagine glycans are attached at residues asparagine 107 and asparagine 156. Aspartate 175 is a binding site for Zn(2+). The active-site Proton acceptor is the glutamate 207. Glutamate 208 is a Zn(2+) binding site.

Belongs to the peptidase M20A family. Zn(2+) serves as cofactor.

It localises to the secreted. The sequence is that of Probable carboxypeptidase ACLA_088580 from Aspergillus clavatus (strain ATCC 1007 / CBS 513.65 / DSM 816 / NCTC 3887 / NRRL 1 / QM 1276 / 107).